The chain runs to 338 residues: Anthranilate phosphoribosyltransferase (338 aa).

Residues glycine 78, glycine 81–aspartate 82, serine 86, asparagine 88–threonine 91, lysine 106–serine 114, and serine 118 each bind 5-phospho-alpha-D-ribose 1-diphosphate. Residue glycine 78 coordinates anthranilate. Serine 90 contributes to the Mg(2+) binding site. Asparagine 109 contributes to the anthranilate binding site. Arginine 163 lines the anthranilate pocket. Aspartate 222 and glutamate 223 together coordinate Mg(2+).

Belongs to the anthranilate phosphoribosyltransferase family. Homodimer. Requires Mg(2+) as cofactor.

The catalysed reaction is N-(5-phospho-beta-D-ribosyl)anthranilate + diphosphate = 5-phospho-alpha-D-ribose 1-diphosphate + anthranilate. It participates in amino-acid biosynthesis; L-tryptophan biosynthesis; L-tryptophan from chorismate: step 2/5. Its function is as follows. Catalyzes the transfer of the phosphoribosyl group of 5-phosphorylribose-1-pyrophosphate (PRPP) to anthranilate to yield N-(5'-phosphoribosyl)-anthranilate (PRA). In Staphylococcus carnosus (strain TM300), this protein is Anthranilate phosphoribosyltransferase.